We begin with the raw amino-acid sequence, 446 residues long: Corrinoid/iron-sulfur protein large subunit (446 aa).

The 4Fe-4S domain occupies 2–59 (PLTGLEIYKQLPKKNCGECGTPTCLAFAMNLASGKASLDSCPYVSDAAREALDAAAAP). [4Fe-4S] cluster-binding residues include Cys17, Cys20, Cys25, and Cys42. 5-methoxybenzimidazolylcob(I)amide is bound by residues Thr340, Thr346, 370–373 (GLSV), and Ala433.

Heterohexamer composed of 2 subunits of AcsC, 2 subunits of AcsD and 2 subunits of AcsE. [4Fe-4S] cluster is required as a cofactor.

Its function is as follows. Acts as a methyl group carrier in the anaerobic acetyl-CoA pathway (Wood-Ljungdahl pathway) of carbon monoxide and carbon dioxide fixation. Binds the corrinoid 5-methoxybenzimidazolylcobamide which is then methylated by the AcsE subunit. This chain is Corrinoid/iron-sulfur protein large subunit (acsC), found in Moorella thermoacetica (Clostridium thermoaceticum).